Consider the following 463-residue polypeptide: Heterogeneous nuclear ribonucleoprotein K (463 aa).

At Met1 the chain carries N-acetylmethionine. The interval 1–37 (METEQPEETFPNTETNGEFGKRPAEDMEEEQAFKRSR) is disordered. The segment at 1 to 276 (METEQPEETF…GRGGRPMPPS (276 aa)) is necessary for interaction with DDX1. The segment covering 19–37 (FGKRPAEDMEEEQAFKRSR) has biased composition (basic and acidic residues). Lys34 bears the N6-acetyllysine; alternate mark. A Glycyl lysine isopeptide (Lys-Gly) (interchain with G-Cter in SUMO1); alternate cross-link involves residue Lys34. Residue Lys34 forms a Glycyl lysine isopeptide (Lys-Gly) (interchain with G-Cter in SUMO2); alternate linkage. Residue Ser36 is modified to Phosphoserine. Residue Thr39 is modified to Phosphothreonine. The KH 1 domain occupies 42–104 (MVELRILLQS…ETIGEILKKI (63 aa)). Residues Lys52 and Lys60 each participate in a glycyl lysine isopeptide (Lys-Gly) (interchain with G-Cter in SUMO2) cross-link. Tandem repeats lie at residues 54-76 (AGAVIGKGGKNIKALRTDYNASV) and 59-62 (GKGG). Residues 54–421 (AGAVIGKGGK…QIRHESGASI (368 aa)) form a 2 X 22 AA approximate repeats region. Residues 59 to 407 (GKGGKNIKAL…LAGSIIGKGG (349 aa)) are 5 X 4 AA repeats of G-X-G-G. A phosphoserine mark is found at Ser75 and Ser116. One can recognise a KH 2 domain in the interval 144–209 (DCELRLLIHQ…DRVVECIKII (66 aa)). A Glycyl lysine isopeptide (Lys-Gly) (interchain with G-Cter in SUMO1); alternate cross-link involves residue Lys163. A Glycyl lysine isopeptide (Lys-Gly) (interchain with G-Cter in SUMO2); alternate cross-link involves residue Lys163. Lys198 carries the N6-acetyllysine modification. Residues 209-337 (ILDLISESPI…RPGDRYDGMV (129 aa)) are interaction with ZIK1. Phosphoserine occurs at positions 214 and 216. Lys219 is covalently cross-linked (Glycyl lysine isopeptide (Lys-Gly) (interchain with G-Cter in SUMO2); alternate). Lys219 is subject to N6-succinyllysine; alternate. The segment at 236-273 (YGGFTMMFDDRRGRPVGFPMRGRGGFDRMPPGRGGRPM) is RNA-binding RGG-box. 3 consecutive repeat copies span residues 245–250 (DRRGRP), 257–260 (GRGG), and 267–270 (GRGG). The segment at 245 to 329 (DRRGRPVGFP…LMAYDRRGRP (85 aa)) is 2 X 6 AA repeats of D-R-R-G-R-P. Positions 250–329 (PVGFPMRGRG…LMAYDRRGRP (80 aa)) are disordered. Low complexity predominate over residues 252-266 (GFPMRGRGGFDRMPP). Basic and acidic residues predominate over residues 276–285 (SRRDYDDMSP). Phosphoserine is present on Ser284. The stretch at 295-298 (GRGG) is one 3-4 repeat. Arg316 bears the Omega-N-methylarginine mark. A 2-2 repeat occupies 324–329 (DRRGRP). At Arg377 the chain carries Omega-N-methylarginine. Phosphoserine is present on Ser379. Tyr380 is modified (phosphotyrosine). The 65-residue stretch at 387-451 (IITTQVTIPK…DQIQNAQYLL (65 aa)) folds into the KH 3 domain. 2 repeat units span residues 399–421 (AGSIIGKGGQRIKQIRHESGASI) and 404–407 (GKGG). Lys405 bears the N6-acetyllysine; alternate mark. Lys405 participates in a covalent cross-link: Glycyl lysine isopeptide (Lys-Gly) (interchain with G-Cter in SUMO2); alternate. Phosphoserine is present on Ser420. A Glycyl lysine isopeptide (Lys-Gly) (interchain with G-Cter in SUMO1); alternate cross-link involves residue Lys422. Residue Lys422 forms a Glycyl lysine isopeptide (Lys-Gly) (interchain with G-Cter in SUMO2); alternate linkage. Residue Lys422 forms a Glycyl lysine isopeptide (Lys-Gly) (interchain with G-Cter in SUMO); alternate linkage.

As to quaternary structure, identified in the spliceosome C complex. Interacts with ANKRD28, RBM42 and ZIK1. Interacts with DDX1. Interacts with MDM2; this interaction leads to ubiquitination and proteasomal degradation. Interacts with p53/TP53. Interacts with BRDT. Interacts with IVNS1ABP. Interacts with PPIA/CYPA. Part of a transcription inhibitory ribonucleoprotein complex composed at least of the circular RNA circZNF827, ZNF827 and HNRNPL. In terms of processing, sumoylated by CBX4. Sumoylation is increased upon DNA damage, such as that produced by doxorubicin, etoposide, UV light and camptothecin, due to enhanced CBX4 phosphorylation by HIPK2 under these conditions. Post-translationally, ubiquitinated by MDM2. Doxorubicin treatment does not affect monoubiquitination, but slightly decreases HNRNPK poly-ubiquitination. O-glycosylated (O-GlcNAcylated), in a cell cycle-dependent manner.

The protein resides in the cytoplasm. It localises to the nucleus. Its subcellular location is the nucleoplasm. The protein localises to the cell projection. It is found in the podosome. Its function is as follows. One of the major pre-mRNA-binding proteins. Binds tenaciously to poly(C) sequences. Likely to play a role in the nuclear metabolism of hnRNAs, particularly for pre-mRNAs that contain cytidine-rich sequences. Can also bind poly(C) single-stranded DNA. Plays an important role in p53/TP53 response to DNA damage, acting at the level of both transcription activation and repression. When sumoylated, acts as a transcriptional coactivator of p53/TP53, playing a role in p21/CDKN1A and 14-3-3 sigma/SFN induction. As far as transcription repression is concerned, acts by interacting with long intergenic RNA p21 (lincRNA-p21), a non-coding RNA induced by p53/TP53. This interaction is necessary for the induction of apoptosis, but not cell cycle arrest. As part of a ribonucleoprotein complex composed at least of ZNF827, HNRNPL and the circular RNA circZNF827 that nucleates the complex on chromatin, may negatively regulate the transcription of genes involved in neuronal differentiation. This Oryctolagus cuniculus (Rabbit) protein is Heterogeneous nuclear ribonucleoprotein K (HNRNPK).